The chain runs to 290 residues: Porphobilinogen deaminase (290 aa).

An S-(dipyrrolylmethanemethyl)cysteine modification is found at C238.

It belongs to the HMBS family. Monomer. Dipyrromethane is required as a cofactor.

It catalyses the reaction 4 porphobilinogen + H2O = hydroxymethylbilane + 4 NH4(+). It participates in porphyrin-containing compound metabolism; protoporphyrin-IX biosynthesis; coproporphyrinogen-III from 5-aminolevulinate: step 2/4. Its function is as follows. Tetrapolymerization of the monopyrrole PBG into the hydroxymethylbilane pre-uroporphyrinogen in several discrete steps. This chain is Porphobilinogen deaminase, found in Caldicellulosiruptor saccharolyticus (strain ATCC 43494 / DSM 8903 / Tp8T 6331).